A 3414-amino-acid polypeptide reads, in one-letter code: Genome polyprotein (3414 aa).

The disordered stretch occupies residues 1–27 (MAGKAILKGKGGGPPRRVSKETAKKTR). Residues 1–98 (MAGKAILKGK…LQKRGKRRST (98 aa)) are Cytoplasmic-facing. Positions 98–116 (TTDWTGWLLVAMLLSIALA) are cleaved as a propeptide — ER anchor for the capsid protein C, removed in mature form by serine protease NS3. A helical transmembrane segment spans residues 99-119 (TDWTGWLLVAMLLSIALAATV). At 120 to 242 (RKEGDGTTVI…HLTRVEGWVW (123 aa)) the chain is on the extracellular side. N-linked (GlcNAc...) asparagine; by host glycosylation is present at asparagine 144. Residues 243-260 (KNKSLTLAVVVIVWMTVE) form a helical membrane-spanning segment. A topological domain (cytoplasmic) is located at residue serine 261. Residues 262–280 (AVTRIVIVSALLCLAPAYA) traverse the membrane as a helical segment. The Extracellular segment spans residues 281 to 727 (SRCTHLENRD…HTVLGGAFNS (447 aa)). Intrachain disulfides connect cysteine 283/cysteine 310, cysteine 340/cysteine 396, cysteine 340/cysteine 401, cysteine 354/cysteine 385, cysteine 372/cysteine 396, and cysteine 372/cysteine 401. The fusion peptide stretch occupies residues 378-391 (DRGWGNHCGLFGKG). An N-linked (GlcNAc...) asparagine; by host glycan is attached at asparagine 434. 2 disulfides stabilise this stretch: cysteine 466–cysteine 570 and cysteine 587–cysteine 618. The chain crosses the membrane as a helical span at residues 728–748 (VFGGVGFLPRILLGISLAWLG). Over 749–755 (LNMRNPT) the chain is Cytoplasmic. The helical transmembrane segment at 756–776 (MSMSFLLAGGLVLTMTLGVGA) threads the bilayer. At 777-1132 (DVGCAVDTER…RSMVVADNGE (356 aa)) the chain is on the extracellular side. 6 cysteine pairs are disulfide-bonded: cysteine 780–cysteine 791, cysteine 831–cysteine 920, cysteine 955–cysteine 1000, cysteine 1057–cysteine 1106, cysteine 1068–cysteine 1090, and cysteine 1089–cysteine 1093. Asparagine 861, asparagine 983, and asparagine 999 each carry an N-linked (GlcNAc...) asparagine; by host glycan. Residues 1133–1153 (LLSEGGIPGIVAVFVVLEYII) traverse the membrane as a helical segment. Residues 1154-1158 (RKRPS) are Cytoplasmic-facing. The helical transmembrane segment at 1159–1179 (AGLTVVWGGVVVLALLVTGMV) threads the bilayer. At 1180–1187 (TLQSMLRY) the chain is on the lumenal side. Residues 1188 to 1208 (VIAVGVTFHLELGPEIVALML) traverse the membrane as a helical segment. The Cytoplasmic segment spans residues 1209 to 1236 (LQAVFELRVGLLGAFVLRRSLTTREVVT). A helical transmembrane segment spans residues 1237-1257 (IYFLLLVLELGLPSANLEALW). At 1258–1293 (GWADALAMGAMIFRACTAEGKTGLGLLLVALMTQQN) the chain is on the lumenal side. A helical membrane pass occupies residues 1294-1314 (AVIVHQGLVIFLSVASACSVW). The Cytoplasmic portion of the chain corresponds to 1315-1363 (KLLRGQREQKGLSWIVPLAGRLGGKGSGIRLLAFWELASRRDRRSFSEP). A helical transmembrane segment spans residues 1364–1381 (LTVVGVMLTLASGMMRHT). Serine 1382 is a topological domain (lumenal). The chain crosses the membrane as a helical span at residues 1383–1403 (QEALCALAAASFLLLMLVLGT). Residues 1404-1454 (RKMQLVAEWSGCVEWHPDLADEGGEISLRVRQDALGNFHLTELEKEERMMA) lie on the Cytoplasmic side of the membrane. The segment at 1410–1449 (AEWSGCVEWHPDLADEGGEISLRVRQDALGNFHLTELEKE) is interacts with and activates NS3 protease. An intramembrane region (helical) is located at residues 1455–1475 (FWLLAGLTASALHWTGILVVM). Topologically, residues 1476–2160 (GLWTMSEMLR…KMAERDAPEA (685 aa)) are cytoplasmic. The Peptidase S7 domain maps to 1490–1669 (SDLVFSGQSG…EVEKSRPNLP (180 aa)). Active-site charge relay system; for serine protease NS3 activity residues include histidine 1543, aspartate 1567, and serine 1627. Residues 1675–1831 (TGWTSKGTIT…ESNGAITSEE (157 aa)) form the Helicase ATP-binding domain. Position 1688-1695 (1688-1695 (MHPGSGKT)) interacts with ATP. The DEAH box signature appears at 1779–1782 (DEAH). Positions 1841–2000 (DGFDWITEYE…TLRGPVATFY (160 aa)) constitute a Helicase C-terminal domain. Lysine 1883 is modified (N6-acetyllysine; by host). Residues 2161-2181 (FLTMVEMVVLGLATLGAVWCL) form a helical membrane-spanning segment. The Lumenal segment spans residues 2182–2189 (VLRTSISR). The segment at residues 2190–2210 (MMLGTMVLLVSLALLWAGGVG) is an intramembrane region (helical). A topological domain (lumenal) is located at residue tyrosine 2211. The chain crosses the membrane as a helical span at residues 2212-2232 (GSMAGVALVFYTLLTVLQPEA). Topologically, residues 2233 to 2244 (GKQRSSDDNKLA) are cytoplasmic. Residues 2245–2265 (YFLLTLCSLAGLVAANEMGFL) form a helical membrane-spanning segment. Residues 2266–2299 (EKTKADLSAVLWSEREEPRVWSEWTNIDIQPAKS) lie on the Lumenal side of the membrane. Positions 2300–2320 (WGTYVLVVSLFTPYIIHQLQT) form an intramembrane region, helical. At 2321–2343 (RIQQLVNSAVASGAQAMRDLGGG) the chain is on the lumenal side. The segment at residues 2344 to 2364 (TPFFGVAGHVLTLGVVSLVGA) is an intramembrane region (helical). The Lumenal segment spans residues 2365–2368 (TPTS). A helical transmembrane segment spans residues 2369-2389 (LVVGVGLAAFHLAIVVSGLEA). The Cytoplasmic portion of the chain corresponds to 2390–2432 (ELTQRAHKVFFSAMVRNPMVDGDVINPFGDGEVKPALYERKMS). A helical membrane pass occupies residues 2433 to 2453 (LILAMILCFMSVVLNRTVPAV). Residues 2454 to 2477 (TEASAVGLAAAGQLIRPEADTLWT) are Lumenal-facing. The chain crosses the membrane as a helical span at residues 2478-2498 (MPVACGLSGVVRGSLWGFLPL). At 2499 to 3414 (GHRLWLRTSG…WELKVESSII (916 aa)) the chain is on the cytoplasmic side. Residues 2512 to 2776 (GGSEGDTLGD…EMDLGVGTRC (265 aa)) form the mRNA cap 0-1 NS5-type MT domain. Serine 2567 provides a ligand contact to S-adenosyl-L-methionine. Serine 2567 carries the phosphoserine modification. Catalysis depends on lysine 2572, which acts as the For 2'-O-MTase activity. 5 residues coordinate S-adenosyl-L-methionine: glycine 2597, tryptophan 2598, threonine 2615, isoleucine 2616, and valine 2643. Catalysis depends on aspartate 2657, which acts as the For 2'-O-MTase activity. Isoleucine 2658 lines the S-adenosyl-L-methionine pocket. Catalysis depends on for 2'-O-MTase activity residues lysine 2694 and glutamate 2730. The interval 2730–2734 (EMYYS) is interaction with host SCRIB. Tyrosine 2732 contributes to the S-adenosyl-L-methionine binding site. Glutamate 2950, histidine 2954, cysteine 2959, and cysteine 2962 together coordinate Zn(2+). The RdRp catalytic domain maps to 3040–3189 (GLFYADDTAG…RPIDDRFSKA (150 aa)). Residues histidine 3224, cysteine 3240, and cysteine 3359 each coordinate Zn(2+).

In the N-terminal section; belongs to the class I-like SAM-binding methyltransferase superfamily. mRNA cap 0-1 NS5-type methyltransferase family. As to quaternary structure, homodimer. Forms heterodimers with envelope protein E in the endoplasmic reticulum and Golgi. In terms of assembly, homodimer; in the endoplasmic reticulum and Golgi. As to quaternary structure, forms homodimers as well as homohexamers. NS1 may interact with NS4A. Forms a heterodimer with serine protease NS3. May form homooligomers. In terms of assembly, forms a heterodimer with NS2B. Interacts with NS4B. Interacts with unphosphorylated RNA-directed RNA polymerase NS5; this interaction stimulates RNA-directed RNA polymerase NS5 guanylyltransferase activity. As to quaternary structure, interacts with serine protease NS3. Interacts with host STAT2; this interaction inhibits the phosphorylation of the latter, and, when all viral proteins are present (polyprotein), targets STAT2 for degradation. Specific enzymatic cleavages in vivo yield mature proteins. Cleavages in the lumen of endoplasmic reticulum are performed by host signal peptidase, whereas cleavages in the cytoplasmic side are performed by serine protease NS3. Signal cleavage at the 2K-4B site requires a prior NS3 protease-mediated cleavage at the 4A-2K site. Post-translationally, cleaved in post-Golgi vesicles by a host furin, releasing the mature small envelope protein M, and peptide pr. This cleavage is incomplete as up to 30% of viral particles still carry uncleaved prM. In terms of processing, N-glycosylated. N-glycosylated. The excreted form is glycosylated and this is required for efficient secretion of the protein from infected cells. Post-translationally, acetylated by host KAT5. Acetylation modulates NS3 RNA-binding and unwinding activities and plays an important positive role for viral replication. In terms of processing, phosphorylated on serines residues. This phosphorylation may trigger NS5 nuclear localization.

The protein localises to the virion. It localises to the host nucleus. Its subcellular location is the host cytoplasm. The protein resides in the host perinuclear region. It is found in the secreted. The protein localises to the virion membrane. It localises to the host endoplasmic reticulum membrane. The catalysed reaction is Selective hydrolysis of -Xaa-Xaa-|-Yaa- bonds in which each of the Xaa can be either Arg or Lys and Yaa can be either Ser or Ala.. It carries out the reaction RNA(n) + a ribonucleoside 5'-triphosphate = RNA(n+1) + diphosphate. It catalyses the reaction a ribonucleoside 5'-triphosphate + H2O = a ribonucleoside 5'-diphosphate + phosphate + H(+). The enzyme catalyses ATP + H2O = ADP + phosphate + H(+). The catalysed reaction is a 5'-end (5'-triphosphoguanosine)-ribonucleoside in mRNA + S-adenosyl-L-methionine = a 5'-end (N(7)-methyl 5'-triphosphoguanosine)-ribonucleoside in mRNA + S-adenosyl-L-homocysteine. It carries out the reaction a 5'-end (N(7)-methyl 5'-triphosphoguanosine)-ribonucleoside in mRNA + S-adenosyl-L-methionine = a 5'-end (N(7)-methyl 5'-triphosphoguanosine)-(2'-O-methyl-ribonucleoside) in mRNA + S-adenosyl-L-homocysteine + H(+). In terms of biological role, plays a role in virus budding by binding to the cell membrane and gathering the viral RNA into a nucleocapsid that forms the core of a mature virus particle. During virus entry, may induce genome penetration into the host cytoplasm after hemifusion induced by the surface proteins. Can migrate to the cell nucleus where it modulates host functions. Inhibits RNA silencing by interfering with host Dicer. Its function is as follows. Prevents premature fusion activity of envelope proteins in trans-Golgi by binding to envelope protein E at pH6.0. After virion release in extracellular space, gets dissociated from E dimers. Functionally, acts as a chaperone for envelope protein E during intracellular virion assembly by masking and inactivating envelope protein E fusion peptide. prM is the only viral peptide matured by host furin in the trans-Golgi network probably to avoid catastrophic activation of the viral fusion activity in acidic Golgi compartment prior to virion release. prM-E cleavage is inefficient, and many virions are only partially matured. These uncleaved prM would play a role in immune evasion. In terms of biological role, may play a role in virus budding. Exerts cytotoxic effects by activating a mitochondrial apoptotic pathway through M ectodomain. May display a viroporin activity. Binds to host cell surface receptor and mediates fusion between viral and cellular membranes. Envelope protein is synthesized in the endoplasmic reticulum in the form of heterodimer with protein prM. They play a role in virion budding in the ER, and the newly formed immature particle is covered with 60 spikes composed of heterodimer between precursor prM and envelope protein E. The virion is transported to the Golgi apparatus where the low pH causes dissociation of PrM-E heterodimers and formation of E homodimers. prM-E cleavage is inefficient, and many virions are only partially matured. These uncleaved prM would play a role in immune evasion. Its function is as follows. Involved in immune evasion, pathogenesis and viral replication. Once cleaved off the polyprotein, is targeted to three destinations: the viral replication cycle, the plasma membrane and the extracellular compartment. Essential for viral replication. Required for formation of the replication complex and recruitment of other non-structural proteins to the ER-derived membrane structures. Excreted as a hexameric lipoparticle that plays a role against host immune response. Antagonizing the complement function. Binds to the host macrophages and dendritic cells. Inhibits signal transduction originating from Toll-like receptor 3 (TLR3). Functionally, component of the viral RNA replication complex that functions in virion assembly and antagonizes the host immune response. In terms of biological role, required cofactor for the serine protease function of NS3. May have membrane-destabilizing activity and form viroporins. Displays three enzymatic activities: serine protease, NTPase and RNA helicase. NS3 serine protease, in association with NS2B, performs its autocleavage and cleaves the polyprotein at dibasic sites in the cytoplasm: C-prM, NS2A-NS2B, NS2B-NS3, NS3-NS4A, NS4A-2K and NS4B-NS5. NS3 RNA helicase binds RNA and unwinds dsRNA in the 3' to 5' direction. Its function is as follows. Regulates the ATPase activity of the NS3 helicase activity. NS4A allows NS3 helicase to conserve energy during unwinding. Functionally, functions as a signal peptide for NS4B and is required for the interferon antagonism activity of the latter. In terms of biological role, induces the formation of ER-derived membrane vesicles where the viral replication takes place. Inhibits interferon (IFN)-induced host STAT1 phosphorylation and nuclear translocation, thereby preventing the establishment of cellular antiviral state by blocking the IFN-alpha/beta pathway. Inhibits STAT2 translocation in the nucleus after IFN-alpha treatment. Replicates the viral (+) and (-) RNA genome, and performs the capping of genomes in the cytoplasm. NS5 methylates viral RNA cap at guanine N-7 and ribose 2'-O positions. Besides its role in RNA genome replication, also prevents the establishment of cellular antiviral state by blocking the interferon-alpha/beta (IFN-alpha/beta) signaling pathway. Inhibits host TYK2 and STAT2 phosphorylation, thereby preventing activation of JAK-STAT signaling pathway. The protein is Genome polyprotein of Homo sapiens (Human).